Consider the following 160-residue polypeptide: ATP synthase subunit b (160 aa).

Residues 5–27 traverse the membrane as a helical segment; sequence IEQILTQIIAFLIMLGVLKKFVW.

The protein belongs to the ATPase B chain family. As to quaternary structure, F-type ATPases have 2 components, F(1) - the catalytic core - and F(0) - the membrane proton channel. F(1) has five subunits: alpha(3), beta(3), gamma(1), delta(1), epsilon(1). F(0) has three main subunits: a(1), b(2) and c(10-14). The alpha and beta chains form an alternating ring which encloses part of the gamma chain. F(1) is attached to F(0) by a central stalk formed by the gamma and epsilon chains, while a peripheral stalk is formed by the delta and b chains.

Its subcellular location is the cell inner membrane. F(1)F(0) ATP synthase produces ATP from ADP in the presence of a proton or sodium gradient. F-type ATPases consist of two structural domains, F(1) containing the extramembraneous catalytic core and F(0) containing the membrane proton channel, linked together by a central stalk and a peripheral stalk. During catalysis, ATP synthesis in the catalytic domain of F(1) is coupled via a rotary mechanism of the central stalk subunits to proton translocation. In terms of biological role, component of the F(0) channel, it forms part of the peripheral stalk, linking F(1) to F(0). In Protochlamydia amoebophila (strain UWE25), this protein is ATP synthase subunit b.